The following is a 618-amino-acid chain: MPIQVLPPQLANQIAAGEVVERPASVVKELVENSLDAGATRVDIDIERGGAKLIRIRDNGCGIKKEELALALARHATSKIASLDDLEAIISLGFRGEALASISSVSRLTLTSRTAEQAEAWQAYAEGRDMDVTVKPAAHPVGTTLEVLDLFYNTPARRKFMRTEKTEFNHIDEIIRRIALARFDVTLNLSHNGKLVRQYRAVAKDGQKERRLGAICGTPFLEQALAIEWQHGDLTLRGWVADPNHTTTALTEIQYCYVNGRMMRDRLINHAIRQACEDKLGADQQPAFVLYLEIDPHQVDVNVHPAKHEVRFHQSRLVHDFIYQGVLSVLQQQTETTLPLEDIAPAPRHVPENRIAAGRNHFAVPAEPTAAREPATPRYSGGASGGNGGRQSAGGWPHAQPGYQKQQGEVYRALLQTPTTSPAPEAVAPALDGHSQSFGRVLTIVCGDCALLEHAGTIQLLSLPVAERWLRQAQLTPGQSPVCAQPLLIPLRLKVSADEKAALQKAQSLLGELGIEFQSDAQHVTIRAVPLPLRQQNLQILIPELIGYLAQQTTFATVNIAQWIARNVQSEHPQWSMAQAISLLADVERLCPQLVKAPPGGLLQPVDLHSAMNALKHE.

The span at 367–381 (EPTAAREPATPRYSG) shows a compositional bias: low complexity. The interval 367 to 402 (EPTAAREPATPRYSGGASGGNGGRQSAGGWPHAQPG) is disordered. A compositionally biased stretch (gly residues) spans 382 to 392 (GASGGNGGRQS).

Belongs to the DNA mismatch repair MutL/HexB family.

In terms of biological role, this protein is involved in the repair of mismatches in DNA. It is required for dam-dependent methyl-directed DNA mismatch repair. May act as a 'molecular matchmaker', a protein that promotes the formation of a stable complex between two or more DNA-binding proteins in an ATP-dependent manner without itself being part of a final effector complex. The chain is DNA mismatch repair protein MutL from Salmonella heidelberg (strain SL476).